The chain runs to 413 residues: Arginine biosynthesis bifunctional protein ArgJ (413 aa).

Positions 158, 184, 195, 285, 408, and 413 each coordinate substrate. Residue T195 is the Nucleophile of the active site.

This sequence belongs to the ArgJ family. As to quaternary structure, heterotetramer of two alpha and two beta chains.

Its subcellular location is the cytoplasm. It catalyses the reaction N(2)-acetyl-L-ornithine + L-glutamate = N-acetyl-L-glutamate + L-ornithine. It carries out the reaction L-glutamate + acetyl-CoA = N-acetyl-L-glutamate + CoA + H(+). The protein operates within amino-acid biosynthesis; L-arginine biosynthesis; L-ornithine and N-acetyl-L-glutamate from L-glutamate and N(2)-acetyl-L-ornithine (cyclic): step 1/1. It functions in the pathway amino-acid biosynthesis; L-arginine biosynthesis; N(2)-acetyl-L-ornithine from L-glutamate: step 1/4. Catalyzes two activities which are involved in the cyclic version of arginine biosynthesis: the synthesis of N-acetylglutamate from glutamate and acetyl-CoA as the acetyl donor, and of ornithine by transacetylation between N(2)-acetylornithine and glutamate. The polypeptide is Arginine biosynthesis bifunctional protein ArgJ (Brucella melitensis biotype 1 (strain ATCC 23456 / CCUG 17765 / NCTC 10094 / 16M)).